We begin with the raw amino-acid sequence, 162 residues long: Lipoprotein signal peptidase (162 aa).

Transmembrane regions (helical) follow at residues 66 to 86 (PFFIAVTLVAMAAIAITFRKL) and 92 to 112 (LAAVSLSLIFSGAVGNLIDRV). Catalysis depends on residues Asp119 and Asp137. The chain crosses the membrane as a helical span at residues 132–152 (AFNVADSAICVGVALLALDMI).

This sequence belongs to the peptidase A8 family.

It localises to the cell inner membrane. It carries out the reaction Release of signal peptides from bacterial membrane prolipoproteins. Hydrolyzes -Xaa-Yaa-Zaa-|-(S,diacylglyceryl)Cys-, in which Xaa is hydrophobic (preferably Leu), and Yaa (Ala or Ser) and Zaa (Gly or Ala) have small, neutral side chains.. It functions in the pathway protein modification; lipoprotein biosynthesis (signal peptide cleavage). In terms of biological role, this protein specifically catalyzes the removal of signal peptides from prolipoproteins. This chain is Lipoprotein signal peptidase, found in Geobacter metallireducens (strain ATCC 53774 / DSM 7210 / GS-15).